The primary structure comprises 187 residues: Protein lethal(2)essential for life (187 aa).

The sHSP domain maps to 61–170; that stretch reads NSLQKQESGS…TERLVQITQT (110 aa). Residues 151-187 form a disordered region; sequence APMKALPPPQTERLVQITQTGPSSKEDNAKKVETSTA. Residues 174 to 187 show a composition bias toward basic and acidic residues; it reads SKEDNAKKVETSTA.

Belongs to the small heat shock protein (HSP20) family. In terms of tissue distribution, ubiquitously expressed during embryogenesis with no sign of tissue specificity in expression up to stage 16.

Functionally, vital role in embryonic development. The polypeptide is Protein lethal(2)essential for life (l(2)efl) (Drosophila melanogaster (Fruit fly)).